The sequence spans 363 residues: Mitogen-activated protein kinase 4 (363 aa).

The 289-residue stretch at 30 to 318 (YDLVKVVGFG…AKQVMEHPYF (289 aa)) folds into the Protein kinase domain. ATP-binding positions include 36-44 (VGFGACGTV) and Lys-59. The active-site Proton acceptor is the Asp-156. 2 positions are modified to phosphoserine: Ser-186 and Ser-187. Phosphothreonine; by MKK5 is present on Thr-190. Residues 190 to 192 (TQY) carry the TQY motif. A Phosphotyrosine; by MKK5 modification is found at Tyr-192.

The protein belongs to the protein kinase superfamily. CMGC Ser/Thr protein kinase family. MAP kinase subfamily. It depends on Mg(2+) as a cofactor. Dually phosphorylated on Thr-190 and Tyr-192, which activates the enzyme.

The catalysed reaction is L-seryl-[protein] + ATP = O-phospho-L-seryl-[protein] + ADP + H(+). It carries out the reaction L-threonyl-[protein] + ATP = O-phospho-L-threonyl-[protein] + ADP + H(+). Functionally, essential for the two main proliferating life stages, the promastigotes and amastigotes, of the parasite. This is Mitogen-activated protein kinase 4 from Leishmania mexicana.